Reading from the N-terminus, the 330-residue chain is Putative [LysW]-L-2-aminoadipate/[LysW]-L-glutamate phosphate reductase (330 aa).

10–13 (SGYI) provides a ligand contact to NADP(+). Cysteine 142 is an active-site residue. Asparagine 297 contacts NADP(+).

Belongs to the NAGSA dehydrogenase family. Type 1 subfamily. LysY sub-subfamily.

The protein localises to the cytoplasm. It carries out the reaction [amino-group carrier protein]-C-terminal-N-(1-carboxy-5-oxopentan-1-yl)-L-glutamine + phosphate + NADP(+) = [amino-group carrier protein]-C-terminal-N-(1-carboxy-5-phosphooxy-5-oxopentan-1-yl)-L-glutamine + NADPH + H(+). The enzyme catalyses [amino-group carrier protein]-C-terminal-gamma-(L-glutamyl-5-semialdehyde)-L-glutamate + phosphate + NADP(+) = [amino-group carrier protein]-C-terminal-gamma-(5-phospho-L-glutamyl)-L-glutamate + NADPH + H(+). It participates in amino-acid biosynthesis; L-lysine biosynthesis via AAA pathway; L-lysine from L-alpha-aminoadipate (Thermus route): step 3/5. Its pathway is amino-acid biosynthesis; L-arginine biosynthesis. Functionally, involved in both the arginine and lysine biosynthetic pathways. The protein is Putative [LysW]-L-2-aminoadipate/[LysW]-L-glutamate phosphate reductase of Pyrococcus horikoshii (strain ATCC 700860 / DSM 12428 / JCM 9974 / NBRC 100139 / OT-3).